The following is a 1840-amino-acid chain: Collagen alpha-1(V) chain (1840 aa).

The N-terminal stretch at 1–30 (MDVHTRWKAPRPGAPLLSSPLLLLLLLLWA) is a signal peptide. The Laminin G-like domain maps to 72–244 (DVAYRVSKDA…DYCEHYSPDC (173 aa)). The nonhelical region stretch occupies residues 231-445 (RAAYDYCEHY…MPANQDTIYE (215 aa)). A sulfotyrosine mark is found at Tyr-234, Tyr-236, Tyr-240, Tyr-262, Tyr-263, Tyr-336, Tyr-338, and Tyr-344. Disordered regions lie at residues 241 to 547 (SPDC…QESQ) and 561 to 1576 (GPAG…EVIQ). Positions 258-268 (NPDEYYPEGEG) are enriched in acidic residues. Composition is skewed to low complexity over residues 335-352 (DYDY…PYED), 375-387 (PTST…SSNP), and 462-471 (IIEPGMLIEG). Residues 446 to 560 (GIGGPRGEKG…ILQQARLALR (115 aa)) are interrupted collagenous region. A compositionally biased stretch (pro residues) spans 472-487 (PPGPEGPAGLPGPPGT). Composition is skewed to low complexity over residues 508-525 (LPGA…LMLP) and 561-572 (GPAGPMGLTGRP). The tract at residues 561 to 1572 (GPAGPMGLTG…GLPGPPGPPG (1012 aa)) is triple-helical region. A 4-hydroxyproline mark is found at Pro-572, Pro-578, and Pro-623. Position 629 is a 5-hydroxylysine (Lys-629). The residue at position 641 (Pro-641) is a 4-hydroxyproline. Lys-644 bears the 5-hydroxylysine mark. 4-hydroxyproline occurs at positions 650, 656, 659, 677, and 680. Residues 673-688 (PRGLPGEPGPRGLLGP) show a composition bias toward low complexity. Pro-682 and Pro-688 each carry 3-hydroxyproline. Pro residues predominate over residues 689–698 (KGPPGPPGPP). A 4-hydroxyproline mark is found at Pro-692, Pro-698, and Pro-707. The residue at position 710 (Lys-710) is a 5-hydroxylysine. Residues Pro-719, Pro-722, Pro-728, and Pro-734 each carry the 4-hydroxyproline modification. The segment covering 724-743 (QQGNPGAQGLPGPQGAIGPP) has biased composition (low complexity). Lys-746 is modified (5-hydroxylysine). A compositionally biased stretch (low complexity) spans 749-758 (LGKPGLPGMP). 4-hydroxyproline occurs at positions 752, 758, 764, 767, and 773. The residue at position 776 (Lys-776) is a 5-hydroxylysine. Residues Pro-782 and Pro-791 each carry the 4-hydroxyproline modification. Lys-797, Lys-806, Lys-809, and Lys-812 each carry 5-hydroxylysine. The residue at position 818 (Pro-818) is a 4-hydroxyproline. Position 821 is a 5-hydroxylysine (Lys-821). At Pro-836 the chain carries 4-hydroxyproline. The span at 839-848 (RGEDGPEGPK) shows a compositional bias: basic and acidic residues. Residues Lys-848 and Lys-866 each carry the 5-hydroxylysine modification. Residues Pro-872, Pro-875, and Pro-878 each carry the 4-hydroxyproline modification. Lys-884 is subject to 5-hydroxylysine. 4-hydroxyproline is present on residues Pro-890 and Pro-893. A 5-hydroxylysine modification is found at Lys-899. Residues Pro-905 and Pro-908 each carry the 4-hydroxyproline modification. Over residues 910-919 (PRGQRGPTGP) the composition is skewed to low complexity. 4-hydroxyproline occurs at positions 932 and 947. 2 stretches are compositionally biased toward low complexity: residues 973-992 (KDGL…QGKT) and 1001-1013 (VGPQ…TGPM). Residues Pro-1019, Pro-1022, Pro-1025, and Pro-1031 each carry the 4-hydroxyproline modification. The segment covering 1090-1106 (SPGERGPAGAAGPIGIP) has biased composition (low complexity). Residues 1108 to 1117 (RPGPQGPPGP) are compositionally biased toward pro residues. 2 positions are modified to 4-hydroxyproline: Pro-1223 and Pro-1226. Residues 1261 to 1270 (PSGAPGADGP) show a composition bias toward low complexity. The span at 1296–1305 (GLPGEGGPLG) shows a compositional bias: gly residues. Pro residues-rich tracts occupy residues 1382–1400 (TGEP…PGPA) and 1456–1471 (SPGP…PPGL). 4-hydroxyproline is present on residues Pro-1469 and Pro-1472. Residues 1487–1496 (PGLIGLIGPP) are compositionally biased toward low complexity. Residues 1528 to 1543 (PLGPPGPPGLPGPPGP) show a composition bias toward pro residues. Over residues 1544–1556 (KGAKGSSGPTGPK) the composition is skewed to low complexity. The segment at 1573–1607 (EVIQPLPIQASRTRRNIDASQLLDDGAGESYVDYA) is nonhelical region. Tyr-1603 and Tyr-1606 each carry sulfotyrosine. Residues 1611–1839 (EEIFGSLNSL…GFEVGPACFL (229 aa)) enclose the Fibrillar collagen NC1 domain.

This sequence belongs to the fibrillar collagen family. As to quaternary structure, trimers of two alpha 1(V) and one alpha 2(V) chains in most tissues and trimers of one alpha 1(V), one alpha 2(V), and one alpha 3(V) chains in placenta. Interacts with CSPG4. Post-translationally, prolines at the third position of the tripeptide repeating unit (G-X-Y) are hydroxylated in some or all of the chains. Sulfated on 40% of tyrosines. In terms of processing, hydroxylation on proline residues within the sequence motif, GXPG, is most likely to be 4-hydroxy as this fits the requirement for 4-hydroxylation in vertebrates. In terms of tissue distribution, a high molecular weight form was detected in Schwann cells and peripheral nerve. A lower, probably processed form, is detected in all other tissues tested (at protein level).

The protein resides in the secreted. It localises to the extracellular space. The protein localises to the extracellular matrix. Its function is as follows. Type V collagen is a member of group I collagen (fibrillar forming collagen). It is a minor connective tissue component of nearly ubiquitous distribution. Type V collagen binds to DNA, heparan sulfate, thrombospondin, heparin, and insulin. The protein is Collagen alpha-1(V) chain (Col5a1) of Rattus norvegicus (Rat).